Consider the following 187-residue polypeptide: Phosphatidylethanolamine-binding protein 1 (187 aa).

S6 and S13 each carry phosphoserine. T42 is modified (phosphothreonine). 2 positions are modified to phosphoserine: S52 and S98. Residues 93-134 (KGGNISSGTVLSDYVGSGPPKGTGLHRYVWLVYEQDGPLKCD) are interaction with RAF1.

It belongs to the phosphatidylethanolamine-binding protein family. Has a tendency to form dimers by disulfide cross-linking. Interacts with RAF1 and this interaction is enhanced if RAF1 is phosphorylated on residues 'Ser-338', 'Ser-339', 'Tyr-340' and 'Tyr-341'. Interacts with ALOX15; in response to IL13/interleukin-13, prevents the interaction of PEBP1 with RAF1 to activate the ERK signaling cascade.

It localises to the cytoplasm. Its function is as follows. Binds ATP, opioids and phosphatidylethanolamine. Has lower affinity for phosphatidylinositol and phosphatidylcholine. Serine protease inhibitor which inhibits thrombin, neuropsin and chymotrypsin but not trypsin, tissue type plasminogen activator and elastase. Inhibits the kinase activity of RAF1 by inhibiting its activation and by dissociating the RAF1/MEK complex and acting as a competitive inhibitor of MEK phosphorylation. HCNP may be involved in the function of the presynaptic cholinergic neurons of the central nervous system. HCNP increases the production of choline acetyltransferase but not acetylcholinesterase. Seems to be mediated by a specific receptor. The chain is Phosphatidylethanolamine-binding protein 1 (PEBP1) from Oryctolagus cuniculus (Rabbit).